Reading from the N-terminus, the 298-residue chain is uncharacterized protein (298 aa).

10 helical membrane-spanning segments follow: residues 9–28 (GYVL…LYFK), 38–60 (IIVQ…WKHP), 72–94 (RFVV…VWAV), 104–121 (LGYY…MLLL), 128–145 (LQWL…QQVW), 150–167 (LPWV…YGLI), 174–196 (AALP…WLLF), 211–233 (PEAL…FNAA), 240–262 (ATLG…LLFG), and 272–291 (AFAF…WRSL). In terms of domain architecture, EamA spans 18-141 (VIWGLFPLYF…AVALASLGVA (124 aa)).

This sequence belongs to the EamA transporter family.

It is found in the cell membrane. This is an uncharacterized protein from Pseudomonas aeruginosa (strain ATCC 15692 / DSM 22644 / CIP 104116 / JCM 14847 / LMG 12228 / 1C / PRS 101 / PAO1).